The following is a 341-amino-acid chain: MIKQAIEKVVNHENLTFEESEAVLDEIMNGEASEVQTASLLTALTAKNPTIDEIAGAAASMRSHALAFPETKDVLEIVGTGGDHANTFNISTTSAIVVAATGTQVAKHGNRAASSKSGAADVLEALGLDINETPAVSYESLQENNLAFLFAQEYHKSMKYVATVRKQLGFRTIFNILGPLANPAHPTHQLLGVYDETLLEPLANVLKKLGVTNAMVVHGRDGLDEMTTADETAVVELQDDHLTKYTVTPEQFGLKRRQRADLVGGTPEANADITRRILAGDHGPQRDIVLLNAGAALHVAHPALSIQAGIDLAAKTIDDGKAFEELNRLLAFSDKRKDVVA.

Residues Gly-79, 82–83 (GD), Thr-87, 89–92 (NIST), 107–115 (KHGNRAASS), and Ala-119 each bind 5-phospho-alpha-D-ribose 1-diphosphate. Residue Gly-79 coordinates anthranilate. Ser-91 contacts Mg(2+). Asn-110 contacts anthranilate. Anthranilate is bound at residue Arg-165. Mg(2+) is bound by residues Asp-224 and Glu-225.

Belongs to the anthranilate phosphoribosyltransferase family. In terms of assembly, homodimer. Requires Mg(2+) as cofactor.

The enzyme catalyses N-(5-phospho-beta-D-ribosyl)anthranilate + diphosphate = 5-phospho-alpha-D-ribose 1-diphosphate + anthranilate. It functions in the pathway amino-acid biosynthesis; L-tryptophan biosynthesis; L-tryptophan from chorismate: step 2/5. Functionally, catalyzes the transfer of the phosphoribosyl group of 5-phosphorylribose-1-pyrophosphate (PRPP) to anthranilate to yield N-(5'-phosphoribosyl)-anthranilate (PRA). In Lacticaseibacillus paracasei (strain ATCC 334 / BCRC 17002 / CCUG 31169 / CIP 107868 / KCTC 3260 / NRRL B-441) (Lactobacillus paracasei), this protein is Anthranilate phosphoribosyltransferase.